A 368-amino-acid chain; its full sequence is Zinc finger protein 24 (368 aa).

Residue lysine 22 forms a Glycyl lysine isopeptide (Lys-Gly) (interchain with G-Cter in SUMO2) linkage. Lysine 27 is covalently cross-linked (Glycyl lysine isopeptide (Lys-Gly) (interchain with G-Cter in SUMO1); alternate). Residue lysine 27 forms a Glycyl lysine isopeptide (Lys-Gly) (interchain with G-Cter in SUMO2); alternate linkage. Residues 52-134 (RQRFRQFGYQ…TVLEDLESEL (83 aa)) enclose the SCAN box domain. Residues serine 132 and serine 142 each carry the phosphoserine modification. Residues lysine 147, lysine 177, and lysine 236 each participate in a glycyl lysine isopeptide (Lys-Gly) (interchain with G-Cter in SUMO2) cross-link. The C2H2-type 1 zinc finger occupies 251 to 273 (HICDECGKHFSQGSALILHQRIH). Positions 251 to 301 (HICDECGKHFSQGSALILHQRIHSGEKPYGCVECGKAFSRSSILVQHQRVH) are necessary and sufficient for nuclear localization. Serine 274 bears the Phosphoserine mark. Residues lysine 277 and lysine 286 each participate in a glycyl lysine isopeptide (Lys-Gly) (interchain with G-Cter in SUMO2) cross-link. C2H2-type zinc fingers lie at residues 279–301 (YGCV…QRVH), 307–329 (YKCL…QRIH), and 335–357 (YECV…QRRH). Phosphoserine is present on serine 292. Residue tyrosine 335 is modified to Phosphotyrosine. Glycyl lysine isopeptide (Lys-Gly) (interchain with G-Cter in SUMO2) cross-links involve residues lysine 361 and lysine 367.

It belongs to the krueppel C2H2-type zinc-finger protein family. In terms of processing, sumoylated.

The protein localises to the nucleus. Functionally, transcription factor required for myelination of differentiated oligodendrocytes. Required for the conversion of oligodendrocytes from the premyelinating to the myelinating state. In the developing central nervous system (CNS), involved in the maintenance in the progenitor stage by promoting the cell cycle. Specifically binds to the 5'-TCAT-3' DNA sequence. Has transcription repressor activity in vitro. This chain is Zinc finger protein 24 (Znf24), found in Rattus norvegicus (Rat).